The following is a 129-amino-acid chain: UPF0344 protein USA300HOU_0928 (129 aa).

Transmembrane regions (helical) follow at residues 1–21 (MLHLHILSWVLAIILFIATYL), 36–56 (LHMILRLFMLLTLISGFWILI), 67–87 (MLLTLKMLCGVAVVGLMEVSI), and 99–119 (MFWITIALIIITMVLGVILPL).

This sequence belongs to the UPF0344 family.

It localises to the cell membrane. In Staphylococcus aureus (strain USA300 / TCH1516), this protein is UPF0344 protein USA300HOU_0928.